The primary structure comprises 453 residues: tRNA modification GTPase MnmE (453 aa).

Residues Arg-22, Glu-79, and Lys-119 each coordinate (6S)-5-formyl-5,6,7,8-tetrahydrofolate. Residues 215–376 (GMKVVIAGRP…LKAHLKSLMG (162 aa)) form the TrmE-type G domain. Asn-225 lines the K(+) pocket. Residues 225–230 (NAGKSS), 244–250 (TEIAGTT), 269–272 (DTAG), and 334–337 (NKAD) contribute to the GTP site. Residue Ser-229 coordinates Mg(2+). 3 residues coordinate K(+): Thr-244, Ile-246, and Thr-249. A Mg(2+)-binding site is contributed by Thr-250. Lys-453 serves as a coordination point for (6S)-5-formyl-5,6,7,8-tetrahydrofolate.

Belongs to the TRAFAC class TrmE-Era-EngA-EngB-Septin-like GTPase superfamily. TrmE GTPase family. In terms of assembly, homodimer. Heterotetramer of two MnmE and two MnmG subunits. The cofactor is K(+).

The protein resides in the cytoplasm. Exhibits a very high intrinsic GTPase hydrolysis rate. Involved in the addition of a carboxymethylaminomethyl (cmnm) group at the wobble position (U34) of certain tRNAs, forming tRNA-cmnm(5)s(2)U34. This chain is tRNA modification GTPase MnmE, found in Shewanella loihica (strain ATCC BAA-1088 / PV-4).